We begin with the raw amino-acid sequence, 358 residues long: Trace amine-associated receptor 7e (358 aa).

Over 1-47 the chain is Extracellular; sequence MATDDASFPWDQDSILSRDLLSALSSQLCYENLNRSCIRSPYSPGPR. The N-linked (GlcNAc...) asparagine glycan is linked to N34. 2 disulfides stabilise this stretch: C37-C201 and C120-C205. The chain crosses the membrane as a helical span at residues 48-68; the sequence is LILHAVFGFSAVLAVCGNLLV. Over 69–83 the chain is Cytoplasmic; the sequence is MTSILHFRQLHSPAN. A helical membrane pass occupies residues 84–104; the sequence is FLVASLACADLLVGLTVMPFS. The Extracellular portion of the chain corresponds to 105–121; it reads MVRSVEGCWYFGDIYCK. The helical transmembrane segment at 122–143 threads the bilayer; sequence FHSSFDVSFCYSSIFHLCFISV. The Cytoplasmic portion of the chain corresponds to 144–166; sequence DRYIAVSDPLIYLTRFTASVSGK. Residues 167 to 187 form a helical membrane-spanning segment; it reads CITFSWFLSIIYSFSLLYTGA. Topologically, residues 188–212 are extracellular; the sequence is SEAGLEDLVSALTCVGGCQLAVNQS. N210 is a glycosylation site (N-linked (GlcNAc...) asparagine). Residues 213–233 traverse the membrane as a helical segment; it reads WVFINFLLFLVPTLVMMTVYS. The Cytoplasmic segment spans residues 234 to 274; it reads KVFLIAKQQAQNIEKIGKQTARASESYKDRVAKRERKAAKT. A helical membrane pass occupies residues 275 to 295; sequence LGITVAAFLLSWLPYFIDSII. Over 296-309 the chain is Extracellular; sequence DAFLGFITPTYVYE. A helical membrane pass occupies residues 310–333; that stretch reads ILVWIAYYNSAMNPLIYAFFYPWF. The Cytoplasmic segment spans residues 334–358; the sequence is RKAIKLIVTGKILRENSSATNLFPE.

Belongs to the G-protein coupled receptor 1 family.

The protein resides in the cell membrane. Functionally, olfactory receptor specific for N,N-dimethylalkylamines trace amines. Trace amine compounds are enriched in animal body fluids and act on trace amine-associated receptors (TAARs) to elicit both intraspecific and interspecific innate behaviors. Ligand-binding causes a conformation change that triggers signaling via G(s)-class of G alpha proteins (GNAL or GNAS). This chain is Trace amine-associated receptor 7e, found in Rattus norvegicus (Rat).